We begin with the raw amino-acid sequence, 42 residues long: Beta-defensin 6 (42 aa).

A Pyrrolidone carboxylic acid modification is found at glutamine 1. 3 disulfides stabilise this stretch: cysteine 9–cysteine 38, cysteine 16–cysteine 31, and cysteine 21–cysteine 39.

This sequence belongs to the beta-defensin family. In terms of tissue distribution, neutrophilic granules.

The protein localises to the secreted. Its function is as follows. Has bactericidal activity. Active against E.coli ML35 and S.aureus 502A. This chain is Beta-defensin 6 (DEFB6), found in Bos taurus (Bovine).